The primary structure comprises 36 residues: Delta-amaurobitoxin-Pl1c (36 aa).

Disulfide bonds link Cys3–Cys19, Cys10–Cys24, Cys18–Cys34, and Cys26–Cys32.

Expressed by the venom gland.

It localises to the secreted. Its function is as follows. Binds at site 4 of sodium channels (Nav) and inhibits the fast inactivation of cockroach channels. This toxin is active only on insects. Has a potent activity against S.litura larvae. The chain is Delta-amaurobitoxin-Pl1c from Pireneitega luctuosa (Tangled nest spider).